Here is a 229-residue protein sequence, read N- to C-terminus: MKRKNIALIPAAGIGARFGADKPKQYVEIGSKTVLEHTIGIFERHEAVDLTVVVVSPEDTFADKVQTAFPQVRVWKNGGQTRAETVRNGVAKLLETGLAAETDNILVHDAARCCLPSEALTRLIEQAGNAAEGGILAIPIADTLKCADGGNISATVERTSLWQAQTPQLFRAGLLHRALAAENLDGITDEASAVEKLGVRPLLIQGDVRNLKLTQPQDAYIVRLLLDAV.

This sequence belongs to the IspD/TarI cytidylyltransferase family. IspD subfamily.

It carries out the reaction 2-C-methyl-D-erythritol 4-phosphate + CTP + H(+) = 4-CDP-2-C-methyl-D-erythritol + diphosphate. It participates in isoprenoid biosynthesis; isopentenyl diphosphate biosynthesis via DXP pathway; isopentenyl diphosphate from 1-deoxy-D-xylulose 5-phosphate: step 2/6. Its function is as follows. Catalyzes the formation of 4-diphosphocytidyl-2-C-methyl-D-erythritol from CTP and 2-C-methyl-D-erythritol 4-phosphate (MEP). This is 2-C-methyl-D-erythritol 4-phosphate cytidylyltransferase from Neisseria meningitidis serogroup B (strain ATCC BAA-335 / MC58).